The chain runs to 512 residues: Alpha-amylase (512 aa).

A signal peptide spans 1–29 (MKQQKRLYARLLTLLFALIFLLPHSAAAA). N133, D190, A210, D212, D223, D229, D231, and D233 together coordinate Ca(2+). D190 contacts Na(+). Na(+) is bound by residues D212, D223, and D229. D260 acts as the Nucleophile in catalysis. Ca(2+) is bound at residue H264. Catalysis depends on E290, which acts as the Proton donor. Ca(2+)-binding residues include G329, Y331, H435, D436, and D459.

The protein belongs to the glycosyl hydrolase 13 family. Monomer. Ca(2+) serves as cofactor. Requires Na(+) as cofactor.

Its subcellular location is the secreted. The enzyme catalyses Endohydrolysis of (1-&gt;4)-alpha-D-glucosidic linkages in polysaccharides containing three or more (1-&gt;4)-alpha-linked D-glucose units.. The polypeptide is Alpha-amylase (amyS) (Bacillus licheniformis).